The following is a 417-amino-acid chain: Serine hydroxymethyltransferase 1 (417 aa).

(6S)-5,6,7,8-tetrahydrofolate contacts are provided by residues leucine 121 and 125–127 (GHL). Lysine 229 is modified (N6-(pyridoxal phosphate)lysine). A (6S)-5,6,7,8-tetrahydrofolate-binding site is contributed by 355-357 (SPF).

It belongs to the SHMT family. Homodimer. Pyridoxal 5'-phosphate is required as a cofactor.

Its subcellular location is the cytoplasm. The catalysed reaction is (6R)-5,10-methylene-5,6,7,8-tetrahydrofolate + glycine + H2O = (6S)-5,6,7,8-tetrahydrofolate + L-serine. Its pathway is one-carbon metabolism; tetrahydrofolate interconversion. It functions in the pathway amino-acid biosynthesis; glycine biosynthesis; glycine from L-serine: step 1/1. Catalyzes the reversible interconversion of serine and glycine with tetrahydrofolate (THF) serving as the one-carbon carrier. This reaction serves as the major source of one-carbon groups required for the biosynthesis of purines, thymidylate, methionine, and other important biomolecules. Also exhibits THF-independent aldolase activity toward beta-hydroxyamino acids, producing glycine and aldehydes, via a retro-aldol mechanism. The polypeptide is Serine hydroxymethyltransferase 1 (Pectobacterium atrosepticum (strain SCRI 1043 / ATCC BAA-672) (Erwinia carotovora subsp. atroseptica)).